We begin with the raw amino-acid sequence, 177 residues long: Iron-sulfur cluster assembly protein SufA (177 aa).

The N-terminal stretch at 1–18 (MTIHIFLCFLLILKIVNA) is a signal peptide. Residues Cys101, Cys169, and Cys171 each coordinate [4Fe-4S] cluster.

It belongs to the HesB/IscA family. Homodimer. Homotetramer formation is observed in vitro.

Its subcellular location is the plastid. The protein localises to the apicoplast. The protein operates within cofactor biosynthesis; iron-sulfur cluster biosynthesis. Participates in the sulfur mobilization (SUF) pathway for iron-sulfur (Fe-S) cluster biogenesis. Involved in the pre-assembly of [4Fe-4S] clusters and their transfer to target proteins. The polypeptide is Iron-sulfur cluster assembly protein SufA (Plasmodium falciparum (isolate 3D7)).